A 264-amino-acid polypeptide reads, in one-letter code: Major prion protein (264 aa).

Residues 1-24 form the signal peptide; the sequence is MVKSHIGSWILVLFVAMWSDVGLC. The segment at 25-241 is interaction with GRB2, ERI3 and SYN1; that stretch reads KKRPKPGGGW…ESEAYYQRGA (217 aa). Residues 28–118 form a disordered region; sequence PKPGGGWNTG…QWNKPSKPKT (91 aa). A run of 6 repeats spans residues 54-62, 63-70, 71-78, 79-86, 87-94, and 95-103. Residues 54-103 form a 6 X 8 AA tandem repeats of P-H-G-G-G-W-G-Q region; that stretch reads SQGGGGWGQPHGGGWGQPHGGGWGQPHGGGWGQPHGGGWGQPHGGGGWGQ. A compositionally biased stretch (gly residues) spans 55–107; it reads QGGGGWGQPHGGGWGQPHGGGWGQPHGGGWGQPHGGGWGQPHGGGGWGQGGTH. The Cu(2+) site is built by His72, Gly73, Gly74, His80, Gly81, Gly82, His88, Gly89, Gly90, His96, Gly98, and Gly99. A disulfide bridge links Cys190 with Cys225. N-linked (GlcNAc...) asparagine glycans are attached at residues Asn192 and Asn208. Ala241 carries the GPI-anchor amidated alanine lipid modification. The propeptide at 242–264 is removed in mature form; that stretch reads SVILFSSPPVILLISFLIFLIVG.

Belongs to the prion family. As to quaternary structure, monomer and homodimer. Has a tendency to aggregate into amyloid fibrils containing a cross-beta spine, formed by a steric zipper of superposed beta-strands. Soluble oligomers may represent an intermediate stage on the path to fibril formation. Copper binding may promote oligomerization. Interacts with GRB2, APP, ERI3/PRNPIP and SYN1. Mislocalized cytosolically exposed PrP interacts with MGRN1; this interaction alters MGRN1 subcellular location and causes lysosomal enlargement. Interacts with KIAA1191.

The protein localises to the cell membrane. It is found in the golgi apparatus. In terms of biological role, its primary physiological function is unclear. Has cytoprotective activity against internal or environmental stresses. May play a role in neuronal development and synaptic plasticity. May be required for neuronal myelin sheath maintenance. May play a role in iron uptake and iron homeostasis. Soluble oligomers are toxic to cultured neuroblastoma cells and induce apoptosis (in vitro). Association with GPC1 (via its heparan sulfate chains) targets PRNP to lipid rafts. Also provides Cu(2+) or Zn(2+) for the ascorbate-mediated GPC1 deaminase degradation of its heparan sulfate side chains. The sequence is that of Major prion protein (PRNP) from Tragelaphus imberbis (Lesser kudu).